Consider the following 246-residue polypeptide: UDP-N-acetyl-D-mannosaminuronic acid transferase (246 aa).

The protein belongs to the glycosyltransferase 26 family.

It catalyses the reaction UDP-N-acetyl-alpha-D-mannosaminouronate + N-acetyl-alpha-D-glucosaminyl-di-trans,octa-cis-undecaprenyl diphosphate = beta-D-ManNAcA-(1-&gt;4)-alpha-D-GlcNAc-di-trans,octa-cis-undecaprenyl diphosphate + UDP + H(+). It participates in bacterial outer membrane biogenesis; enterobacterial common antigen biosynthesis. Functionally, catalyzes the synthesis of Und-PP-GlcNAc-ManNAcA (Lipid II), the second lipid-linked intermediate involved in enterobacterial common antigen (ECA) synthesis. This Shigella flexneri protein is UDP-N-acetyl-D-mannosaminuronic acid transferase.